We begin with the raw amino-acid sequence, 81 residues long: Cytochrome b559 subunit alpha (81 aa).

Residues 21-35 traverse the membrane as a helical segment; sequence VIHALTIPALFLAGW. Heme is bound at residue His23.

It belongs to the PsbE/PsbF family. In terms of assembly, heterodimer of an alpha subunit and a beta subunit. PSII is composed of 1 copy each of membrane proteins PsbA, PsbB, PsbC, PsbD, PsbE, PsbF, PsbH, PsbI, PsbJ, PsbK, PsbL, PsbM, PsbT, PsbX, PsbY, PsbZ, Psb30/Ycf12, peripheral proteins PsbO, CyanoQ (PsbQ), PsbU, PsbV and a large number of cofactors. It forms dimeric complexes. Heme b serves as cofactor.

The protein resides in the cellular thylakoid membrane. Its function is as follows. This b-type cytochrome is tightly associated with the reaction center of photosystem II (PSII). PSII is a light-driven water:plastoquinone oxidoreductase that uses light energy to abstract electrons from H(2)O, generating O(2) and a proton gradient subsequently used for ATP formation. It consists of a core antenna complex that captures photons, and an electron transfer chain that converts photonic excitation into a charge separation. The polypeptide is Cytochrome b559 subunit alpha (Synechococcus sp. (strain JA-2-3B'a(2-13)) (Cyanobacteria bacterium Yellowstone B-Prime)).